Here is a 218-residue protein sequence, read N- to C-terminus: MGTLLAFVVGAALVSSAWGGCVEVDSETEAVYGMTFKILCISCKRRSETNAETFTEWTFRQKGTEEFVKILRYENEVLQLEEDERFEGRVVWNGSRGTKDLQDLSIFITNVTYNHSGDYECHVYRLLFFDNYEHNTSVVKKIHLEVVDKANRDMASIVSEIMMYVLIVVLTIWLVAEMVYCYKKIAAATEAAAQENASEYLAITSESKENCTGVQVAE.

The N-terminal stretch at 1 to 18 (MGTLLAFVVGAALVSSAW) is a signal peptide. Residues 19–157 (GGCVEVDSET…DKANRDMASI (139 aa)) lie on the Extracellular side of the membrane. Disulfide bonds link Cys21–Cys43 and Cys40–Cys121. The Ig-like C2-type domain occupies 22 to 150 (VEVDSETEAV…KIHLEVVDKA (129 aa)). 4 N-linked (GlcNAc...) asparagine glycosylation sites follow: Asn93, Asn110, Asn114, and Asn135. The chain crosses the membrane as a helical span at residues 158-179 (VSEIMMYVLIVVLTIWLVAEMV). Residues 180-218 (YCYKKIAAATEAAAQENASEYLAITSESKENCTGVQVAE) lie on the Cytoplasmic side of the membrane.

Belongs to the sodium channel auxiliary subunit SCN1B (TC 8.A.17) family. As to quaternary structure, a voltage-gated sodium (Nav) channel consists of an ion-conducting pore-forming alpha subunit functional on its own that is regulated by one or more beta subunits. Interacts with SCN1A; regulatory subunit of SCN1A/Nav1.1. Interacts with SCN3A; regulatory subunit of SCN3A/Nav1.3. Interacts with SCN4A; regulatory subunit of SCN4A/Nav1.4. Interacts with SCN5A; regulatory subunit of SCN5A/Nav1.5. Interacts with SCN8A; regulatory subunit of SCN8A/Nav1.6. Interacts with SCN9A; regulatory subunit of SCN9A/Nav1.7. Interacts with SCN10A; regulatory subunit of SCN10A/Nav1.8. Interacts with NFASC. Interacts with TMEM65.

Its subcellular location is the cell membrane. It localises to the perikaryon. The protein resides in the cell projection. It is found in the axon. Its function is as follows. Regulatory subunit of multiple voltage-gated sodium (Nav) channels directly mediating the depolarization of excitable membranes. Navs, also called VGSCs (voltage-gated sodium channels) or VDSCs (voltage-dependent sodium channels), operate by switching between closed and open conformations depending on the voltage difference across the membrane. In the open conformation they allow Na(+) ions to selectively pass through the pore, along their electrochemical gradient. The influx of Na+ ions provokes membrane depolarization, initiating the propagation of electrical signals throughout cells and tissues. The accessory beta subunits participate in localization and functional modulation of the Nav channels. Modulates the activity of SCN1A/Nav1.1, SCN2A/Nav1.2, SCN3A/Nav1.3, SCN4A/Nav1.4, SCN5A/Nav1.5, SCN8A/Nav1.6, SCN9A/Nav1.7 and SCN10A/Nav1.8. This is Sodium channel regulatory subunit beta-1 from Bos taurus (Bovine).